A 458-amino-acid chain; its full sequence is RuvB-like helicase 1 (458 aa).

Residue 71-78 (GGPGTGKT) coordinates ATP.

The protein belongs to the RuvB family. In terms of assembly, may form heterododecamers with hel-2/rvb2. Component of the SWR1 chromatin remodeling complex, the INO80 chromatin remodeling complex, and of the R2TP complex.

The protein localises to the nucleus. The enzyme catalyses ATP + H2O = ADP + phosphate + H(+). DNA helicase which participates in several chromatin remodeling complexes, including the SWR1 and the INO80 complexes. The SWR1 complex mediates the ATP-dependent exchange of histone H2A for the H2A variant H2A.Z leading to transcriptional regulation of selected genes by chromatin remodeling. The INO80 complex remodels chromatin by shifting nucleosomes and is involved in DNA repair. Also involved in pre-rRNA processing. In Neurospora crassa (strain ATCC 24698 / 74-OR23-1A / CBS 708.71 / DSM 1257 / FGSC 987), this protein is RuvB-like helicase 1 (hel-1).